A 421-amino-acid polypeptide reads, in one-letter code: MSKTHLTEQKFSDFALHPKVVEALEKKGFHNCTPIQALALPLTLAGRDVAGQAQTGTGKTMAFLTSTFHYLLSHPAIADRKVNQPRALIMAPTRELAVQIHADAEPLAQATGLKLGLAYGGDGYDKQLKVLESGVDILIGTTGRLIDYAKQNHINLCAIQVVVLDEADRMYDLGFIKDIRWLFRRMPPANQRLNMLFSATLSYRVRELAFEQMNNAEYIEVEPEQKTGHRIKEELFYPSNEEKMRLLQTLIEEEWPDRAIIFANTKHRCEEIWGHLAADGHRVGLLTGDVAQKKRLRILDEFTRGDLDILVATDVAARGLHIPAVTHVFNYDLPDDCEDYVHRIGRTGRAGASGHSISLACEEYALNLPAIETYIGHSIPVSKYNPDALMTDLPKPLRLTRPRTGNGPRRTGAPRNRRRSG.

A Q motif motif is present at residues Q9 to A37. The 180-residue stretch at L40–I219 folds into the Helicase ATP-binding domain. Position 53 to 60 (A53 to T60) interacts with ATP. Residues D165 to D168 carry the DEAD box motif. One can recognise a Helicase C-terminal domain in the interval R245–M390. The interval D392–G421 is disordered. Positions P402–P414 are enriched in low complexity.

Belongs to the DEAD box helicase family. RhlB subfamily. Component of the RNA degradosome, which is a multiprotein complex involved in RNA processing and mRNA degradation.

The protein localises to the cytoplasm. The enzyme catalyses ATP + H2O = ADP + phosphate + H(+). DEAD-box RNA helicase involved in RNA degradation. Has RNA-dependent ATPase activity and unwinds double-stranded RNA. The sequence is that of ATP-dependent RNA helicase RhlB from Escherichia coli (strain SMS-3-5 / SECEC).